The following is a 212-amino-acid chain: ECF RNA polymerase sigma factor SigD (212 aa).

The interval 49–119 is sigma-70 factor domain-2; it reads ETIRPIVVRY…VADAHRAAGR (71 aa). A Polymerase core binding motif is present at residues 75–78; the sequence is DVAQ. Residues 152-201 are sigma-70 factor domain-4; sequence NELLEILPAKQREILILRVVVGLSAEETAAAVGSTTGAVRVAQHRALQRL. The H-T-H motif DNA-binding region spans 176–195; that stretch reads AEETAAAVGSTTGAVRVAQH.

It belongs to the sigma-70 factor family. ECF subfamily. Interacts transiently with the RNA polymerase catalytic core formed by RpoA, RpoB, RpoC and RpoZ (2 alpha, 1 beta, 1 beta' and 1 omega subunit) to form the RNA polymerase holoenzyme that can initiate transcription. Interacts (via sigma-70 factor domain 4) with RsdA.

Its function is as follows. Sigma factors are initiation factors that promote the attachment of RNA polymerase to specific initiation sites and are then released. Extracytoplasmic function (ECF) sigma factors are held in an inactive form by an anti-sigma factor until released by regulated intramembrane proteolysis. The protein is ECF RNA polymerase sigma factor SigD (sigD) of Mycobacterium bovis (strain ATCC BAA-935 / AF2122/97).